The following is a 295-amino-acid chain: MNVTPLDELQWKSPEWIQVFGLRTENVLDYFAESPFFDKTSNNQVIKMQRQFSQLNDPNAAVNMTQNIMTLPDGKNGNLEEEFAYVDPARRQILFKYPMYMQLEEELMKLDGTEYVLSSVREPDFWVIRKQRRTNNSGVGSAKGPEIIPLQDYYIIGANIYQSPTIFKIVQSRLMSTSYHLNSTLESLYDLIEFQPSQGVHYKVPTDTSTTATAATNGNNAGGGSNKSSVRPTGGANMATVPSTTNVNMTVNTMGTGGQTIDNGTGRTGNGNMGITTEMLDKLMVTSIRSTPNYI.

Positions Thr211–Ser243 are disordered. Ser225 carries the post-translational modification Phosphoserine.

This sequence belongs to the Mediator complex subunit 6 family. Component of the Mediator complex, which is composed of at least 21 subunits that form three structurally distinct submodules. The Mediator head module contains MED6, MED8, MED11, SRB4/MED17, SRB5/MED18, ROX3/MED19, SRB2/MED20 and SRB6/MED22, the middle module contains MED1, MED4, NUT1/MED5, MED7, CSE2/MED9, NUT2/MED10, SRB7/MED21 and SOH1/MED31, and the tail module contains MED2, PGD1/MED3, RGR1/MED14, GAL11/MED15 and SIN4/MED16. The head and the middle modules interact directly with RNA polymerase II, whereas the elongated tail module interacts with gene-specific regulatory proteins. MED6 interacts directly with SRB4/MED17 and SRB7/MED21.

The protein localises to the nucleus. Functionally, component of the Mediator complex, a coactivator involved in the regulated transcription of nearly all RNA polymerase II-dependent genes. Mediator functions as a bridge to convey information from gene-specific regulatory proteins to the basal RNA polymerase II transcription machinery. The Mediator complex, having a compact conformation in its free form, is recruited to promoters by direct interactions with regulatory proteins and serves for the assembly of a functional preinitiation complex with RNA polymerase II and the general transcription factors. The Mediator complex unfolds to an extended conformation and partially surrounds RNA polymerase II, specifically interacting with the unphosphorylated form of the C-terminal domain (CTD) of RNA polymerase II. The Mediator complex dissociates from the RNA polymerase II holoenzyme and stays at the promoter when transcriptional elongation begins. This is Mediator of RNA polymerase II transcription subunit 6 (MED6) from Saccharomyces cerevisiae (strain ATCC 204508 / S288c) (Baker's yeast).